Reading from the N-terminus, the 562-residue chain is MNQKQVIAERLAAILPSLEVEAIYNLLEKPKSSEMGDIAFPAFSLAKVERKAPQAIAADIVEKLDTTGFENVVATGPYVNFFLDKAAISHQVLTDVITEKDQYGKLNIGQGRNVTIDMSSPNIAKPFSVGHLRSTVIGDALANIHEKLGYKPIRINHLGDWGKQFGMLIVAYKLWGDKAAVEADPISELLKLYVRINAEAEEKPELDDEARQWFKKLEDGDPEAHELWQWFRDESLVEFNRIYDKLDVTFDSYNGEAFYNDKMDEGIQILEEKGLLQESKGAKIVDLESYNLPPALIMKTDGATLYITRDMATAMYRKRTYDFVKSIYVVGQEQINHFKQLKAVLKEMDFDWSDDMTHITFGLVTKDKKKLSTRKGNIILLEPTLDEAISRALTQIEAKNPDLENKEEVAHAVGVGAVKFYDLKTDRDNGYDFDLEAMVSFEGETGPYVQYAYARIQSILRKANFVPNAENDYKLADTESWEIIKHIQNFSAVVERAGDKFDPSLIAKYAINLAQAFNKYYAHTRILDESPERDSRLALAYATGLVLKEALRLLGVKAPEKM.

Positions 121–131 (PNIAKPFSVGH) match the 'HIGH' region motif.

It belongs to the class-I aminoacyl-tRNA synthetase family. In terms of assembly, monomer.

The protein localises to the cytoplasm. The catalysed reaction is tRNA(Arg) + L-arginine + ATP = L-arginyl-tRNA(Arg) + AMP + diphosphate. This is Arginine--tRNA ligase from Streptococcus suis (strain 98HAH33).